The sequence spans 320 residues: Putative olfactory receptor 2W5 pseudogene (320 aa).

N-linked (GlcNAc...) asparagine glycosylation occurs at Asn5. The next 4 membrane-spanning stretches (helical) occupy residues 30 to 50, 58 to 78, 98 to 118, and 140 to 160; these read VILI…LLLV, PMYF…ASIA, VAQL…LVVM, and LCLQ…FIMC. A disulfide bridge links Cys97 with Cys179. The segment at 267-320 is disordered; sequence LPRSGEVPDSLLHHRHSQHQPPHLHFEEQGCEGDHEETSGVGERGWGASTRGTL. The segment covering 290 to 304 has biased composition (basic and acidic residues); it reads LHFEEQGCEGDHEET.

This sequence belongs to the G-protein coupled receptor 1 family.

It localises to the cell membrane. Odorant receptor. The protein is Putative olfactory receptor 2W5 pseudogene of Homo sapiens (Human).